The following is a 166-amino-acid chain: T-cell surface glycoprotein CD3 zeta chain (166 aa).

A signal peptide spans 1–21 (MKWTALVIVAVLQTQFPVTAA). At 22-30 (QSFGLLDPK) the chain is on the extracellular side. The helical transmembrane segment at 31-51 (LCYLLDGILFIYGVIVTALFL) threads the bilayer. Topologically, residues 52–166 (RAKFSRSADA…ALHMQALPPR (115 aa)) are cytoplasmic. A Phosphoserine modification is found at serine 58. 3 ITAM domains span residues 61-89 (APAYQHGQNPVYNELNVGRREEYAVLDRR), 100-128 (PQRKKNPHEVVYNELRKDKMAEAYSEIGM), and 133-161 (QRRRGKGHDGVYQGLSTATKDTYDALHMQ). Phosphotyrosine is present on residues tyrosine 64, tyrosine 72, tyrosine 83, tyrosine 111, tyrosine 123, tyrosine 144, and tyrosine 155. A disordered region spans residues 126 to 156 (IGMKSDNQRRRGKGHDGVYQGLSTATKDTYD).

This sequence belongs to the CD3Z/FCER1G family. As to quaternary structure, the TCR-CD3 complex is composed of a CD3D/CD3E and a CD3G/CD3E heterodimers that preferentially associate with TCRalpha and TCRbeta, respectively, to form TCRalpha/CD3E/CD3G and TCRbeta/CD3G/CD3E trimers. In turn, the hexamer interacts with CD3Z homodimer to form the TCR-CD3 complex. Alternatively, TCRalpha and TCRbeta can be replaced by TCRgamma and TCRdelta. Interacts with SLA. Interacts with TRAT1. Interacts with DOCK2. Interacts with SLA2. Interacts with SHB. Interacts with ZAP70. Interacts (tyrosine phosphorylated) with SHC1 (via SH2 domain). Interacts with PTPRC. Interacts with CRK; this interaction regulates CD3Z phosphorylation. Interacts (on T cell side) with CD81, ICAM1 and CD9 at immunological synapses between antigen-presenting cells and T cells. Interacts with CD160. Interacts with LY6E. Interacts with LY6E. The signaling subunit of immunoglobulin gamma (IgG) Fc receptor complex. As a homodimer or a heterodimer with FCER1G, associates with the ligand binding subunit FCGR3A (via transmembrane domain); this interaction is a prerequisite for Fc receptor complex expression on the cell surface. Interacts with CD5. In terms of processing, phosphorylated on Tyr residues after T-cell receptor triggering by LCK in association with CD4/CD8.

Its subcellular location is the cell membrane. In terms of biological role, part of the TCR-CD3 complex present on T-lymphocyte cell surface that plays an essential role in adaptive immune response. When antigen presenting cells (APCs) activate T-cell receptor (TCR), TCR-mediated signals are transmitted across the cell membrane by the CD3 chains CD3D, CD3E, CD3G and CD3Z. All CD3 chains contain immunoreceptor tyrosine-based activation motifs (ITAMs) in their cytoplasmic domain. Upon TCR engagement, these motifs become phosphorylated by Src family protein tyrosine kinases LCK and FYN, resulting in the activation of downstream signaling pathways. CD3Z ITAMs phosphorylation creates multiple docking sites for the protein kinase ZAP70 leading to ZAP70 phosphorylation and its conversion into a catalytically active enzyme. Plays an important role in intrathymic T-cell differentiation. Additionally, participates in the activity-dependent synapse formation of retinal ganglion cells (RGCs) in both the retina and dorsal lateral geniculate nucleus (dLGN). This Ovis aries (Sheep) protein is T-cell surface glycoprotein CD3 zeta chain (CD247).